Here is a 208-residue protein sequence, read N- to C-terminus: Putative archaetidylserine decarboxylase proenzyme (208 aa).

Ser172 functions as the Schiff-base intermediate with substrate; via pyruvic acid in the catalytic mechanism. Residue Ser172 is modified to Pyruvic acid (Ser); by autocatalysis.

The protein belongs to the phosphatidylserine decarboxylase family. PSD-A subfamily. As to quaternary structure, heterodimer of a large membrane-associated beta subunit and a small pyruvoyl-containing alpha subunit. The cofactor is pyruvate. Post-translationally, is synthesized initially as an inactive proenzyme. Formation of the active enzyme involves a self-maturation process in which the active site pyruvoyl group is generated from an internal serine residue via an autocatalytic post-translational modification. Two non-identical subunits are generated from the proenzyme in this reaction, and the pyruvate is formed at the N-terminus of the alpha chain, which is derived from the carboxyl end of the proenzyme. The post-translation cleavage follows an unusual pathway, termed non-hydrolytic serinolysis, in which the side chain hydroxyl group of the serine supplies its oxygen atom to form the C-terminus of the beta chain, while the remainder of the serine residue undergoes an oxidative deamination to produce ammonia and the pyruvoyl prosthetic group on the alpha chain.

It is found in the cell membrane. It carries out the reaction archaetidylserine + H(+) = archaetidylethanolamine + CO2. Catalyzes the formation of archaetidylethanolamine (PtdEtn) from archaetidylserine (PtdSer). The chain is Putative archaetidylserine decarboxylase proenzyme from Methanosarcina acetivorans (strain ATCC 35395 / DSM 2834 / JCM 12185 / C2A).